Consider the following 98-residue polypeptide: Small ribosomal subunit protein bS6 (98 aa).

It belongs to the bacterial ribosomal protein bS6 family.

In terms of biological role, binds together with bS18 to 16S ribosomal RNA. The protein is Small ribosomal subunit protein bS6 of Lactobacillus acidophilus (strain ATCC 700396 / NCK56 / N2 / NCFM).